The sequence spans 472 residues: MATNSSTEQSLTKKVWNLATTLAGQGIGFTDYITQLTYLLFLKMDAENVEMFGEESAIPTGYQWADLIAFDGLDLVKQYEETLKLLSELDNLIGTIYTKAQNKIDKPVYLKKVITMIDEEQWLIMDGDVKGAIYESILEKNGQDKKSGAGQYFTPRPLIQAMVDCINPQMGETVCDPACGTGGFLLTAYDYMKGQSASKEKRDFLRDKALHGVDNTPLVVTLASMNLYLHGIGTDRSPIVCEDSLEKEPSTLVDVILANPPFGTRPAGSVDINRPDFYVETKNNQLNFLQHMMLMLKTGGRAAVVLPDNVLFEAGAGETIRKRLLQDFNLHTILRLPTGIFYAQGVKANVLFFSKGQPTKEIWFYDYRTDIKHTLATNKLERHHLDDFVSCYNNRVEIYDAENNPQGRWRKYPVDEIIARDKTSLDITWIKPGGEVDDRSLAELMADIKDKSQTISRAVTELEKLLANIEEN.

Residues 151-156 (QYFTPR), 181-183 (TGG), Asp214, and 243-244 (DS) contribute to the S-adenosyl-L-methionine site.

Belongs to the N(4)/N(6)-methyltransferase family. As to quaternary structure, the type I restriction/modification system is composed of three polypeptides R, M and S; the restriction enzyme has stoichiometry R(2)M(2)S(1) while the methyltransferase is M(2)S(1).

The enzyme catalyses a 2'-deoxyadenosine in DNA + S-adenosyl-L-methionine = an N(6)-methyl-2'-deoxyadenosine in DNA + S-adenosyl-L-homocysteine + H(+). The subtype gamma methyltransferase (M) subunit of a type I restriction enzyme. The M and S subunits together form a methyltransferase (MTase) that methylates two adenine residues of an undetermined sequence. In the presence of the R subunit the complex can also act as an endonuclease, binding to the same target sequence but cutting the DNA some distance from this site. Whether the DNA is cut or modified depends on the methylation state of the target sequence. When the target site is unmodified, the DNA is cut. When the target site is hemimethylated, the complex acts as a maintenance MTase modifying the DNA so that both strands become methylated. After locating a non-methylated recognition site, the enzyme complex serves as a molecular motor that translocates DNA in an ATP-dependent manner until a collision occurs that triggers cleavage. In Bacteroides thetaiotaomicron (strain ATCC 29148 / DSM 2079 / JCM 5827 / CCUG 10774 / NCTC 10582 / VPI-5482 / E50), this protein is Type I restriction enzyme BthVORF4518P methylase subunit.